The following is a 760-amino-acid chain: MRYNQFSYIPTSLERAAEELKELGFDLDLQKTAKANLESFLRKLFFHYPDSDYPLSHLIAKNDMDALSFFQSEQELSKEVFDLLALQVLGFIPGVDFTEADAFLDKLAFPIHFDETEIIKHIHHLLATRCKSGMTLIDDLVSQGMLTMDNDYHFFNGKSLATFDTSQLIREVVYVEAPLDTDQDGQLDLIKVNIIRPQSQKPLPTLMTPSPYHQGINEVANDKKLYRMEKELVVKKRRQITVEDRDFIPLETQPCKLPIGQNLESFSYINSYSLNDYFLARGFANIYVSGVGTAGSTGFMTSGDYAQIESFKAVIDWLNGRATAYTSHSKTHQVRADWANGLVCTTGKSYLGTMSTGLATTGVDGLAMIIAESAISSWYNYYRENGLVCSPGGYPGEDLDVLTELTYSRNLLAGDYLRHNDRYQELLNQQSQALDRQSGDYNQFWHDRNYLKNAHQIKCDVVYTHGLQDWNVKPRQVYEIFNALPSTINKHLFLHQGEHVYMHNWQSIDFRESMNALLCQKLLGLANDFSLPEMIWQDNTCLQNWQERKVFGTSTIKELDLGQELLLIDNHYGEDEFKAYGKDFRAFKAALFEGKANQALVDILLEEDLPINGEIVLQLKVKSSENKGLLSAQILDYGKKKRLGDLPIALTQSSIDNGQNFSRESLKELLFREDSYRVISKGFMNLQNRNNLSSIETIPNNKWMTVRLPLQPTIYHLEKGDTLRVILYTTDFEHTVRDNSNYALTIDLSQSQLIVPIASN.

Active-site charge relay system residues include serine 349, aspartate 469, and histidine 499.

Belongs to the peptidase S15 family. Homodimer.

Its subcellular location is the cytoplasm. It catalyses the reaction Hydrolyzes Xaa-Pro-|- bonds to release unblocked, N-terminal dipeptides from substrates including Ala-Pro-|-p-nitroanilide and (sequentially) Tyr-Pro-|-Phe-Pro-|-Gly-Pro-|-Ile.. Removes N-terminal dipeptides sequentially from polypeptides having unsubstituted N-termini provided that the penultimate residue is proline. This chain is Xaa-Pro dipeptidyl-peptidase, found in Streptococcus pyogenes serotype M6 (strain ATCC BAA-946 / MGAS10394).